The following is a 161-amino-acid chain: Allophycocyanin alpha chain (161 aa).

Asn-71 carries the post-translational modification N4-methylasparagine. Cys-81 contributes to the (2R,3E)-phycocyanobilin binding site.

The protein belongs to the phycobiliprotein family. Heterodimer of an alpha and a beta chain. In terms of processing, contains one covalently linked phycocyanobilin chromophore.

The protein localises to the plastid. It localises to the chloroplast thylakoid membrane. Light-harvesting photosynthetic bile pigment-protein from the phycobiliprotein complex. Allophycocyanin has a maximum absorption at approximately 650 nanometers. This is Allophycocyanin alpha chain (apcA) from Galdieria sulphuraria (Red alga).